The following is a 315-amino-acid chain: MTVSPNTAEQAYLDLCKRIIDEGEHRPDRTGTGTKSLFAPPQLRFDLSNDTFPLLTTKKVFSKGIIHELLWFVAGSTDAKILSEKGVKIWEGNGSREFLDKLGLTHRREGDLGPVYGFQWRHFGAEYKDCDSDYTGQGFDQLQDVIKKLKTNPYDRRIIMSAWNPPDFAKMALPPCHVFCQFYVNFPTSSPDPNNPKQAKTAKPKLSCLLYQRSCDMGLGVPFNIASYALLTKMIAHVVDMDCGEFIHTLGDAHVYLDHIDALKEQFERIPKQFPKLVIKEERKNEIKSIDDFKFEDFEIVGYEPYPPIKMKMSV.

DUMP contacts are provided by residues Arg-29 and 156–157 (RR). The active-site Nucleophile is Cys-176. DUMP-binding positions include 213–216 (RSCD), Asn-224, and 254–256 (HVY). Asp-216 contacts (6R)-5,10-methylene-5,6,7,8-tetrahydrofolate.

Belongs to the thymidylate synthase family. In terms of assembly, homodimer.

It catalyses the reaction dUMP + (6R)-5,10-methylene-5,6,7,8-tetrahydrofolate = 7,8-dihydrofolate + dTMP. It functions in the pathway pyrimidine metabolism; dTTP biosynthesis. The sequence is that of Thymidylate synthase (TMP1) from Candida albicans (strain SC5314 / ATCC MYA-2876) (Yeast).